Reading from the N-terminus, the 536-residue chain is Maintenance of mitochondrial morphology protein 1 (536 aa).

Over 1–25 (MAGPSNQTQPPPPVLTQPSLSFTQG) the chain is Lumenal. A helical membrane pass occupies residues 26–46 (LLVGQLSVVLLIGAFIKFFIF). Topologically, residues 47–536 (GEAPPHPSRN…GSMPDPVVVT (490 aa)) are cytoplasmic. Disordered stretches follow at residues 52–135 (HPSR…SHQP), 275–331 (GPGT…ATAA), 416–467 (GRTG…GGSM), and 505–536 (YGGA…VVVT). Polar residues-rich tracts occupy residues 69-81 (YSLN…SSPR), 88-105 (STSN…NTRS), and 112-121 (YSATPTNPTS). Residues 122-132 (KHSRSRPHHSS) are compositionally biased toward basic residues. In terms of domain architecture, SMP-LTD spans 134–409 (QPESLDWFNV…EPRVQVVGLP (276 aa)). Low complexity predominate over residues 321 to 331 (TNTNTAGATAA). 2 stretches are compositionally biased toward gly residues: residues 442–467 (TAGG…GGSM) and 507–517 (GAQGGGGGGGR).

The protein belongs to the MMM1 family. As to quaternary structure, homodimer. Component of the ER-mitochondria encounter structure (ERMES) or MDM complex, composed of MMM1, MDM10, MDM12 and MDM34. An MMM1 homodimer associates with one molecule of MDM12 on each side in a pairwise head-to-tail manner, and the SMP-LTD domains of MMM1 and MDM12 generate a continuous hydrophobic tunnel for phospholipid trafficking.

The protein resides in the endoplasmic reticulum membrane. In terms of biological role, component of the ERMES/MDM complex, which serves as a molecular tether to connect the endoplasmic reticulum (ER) and mitochondria. Components of this complex are involved in the control of mitochondrial shape and protein biogenesis, and function in nonvesicular lipid trafficking between the ER and mitochondria. The MDM12-MMM1 subcomplex functions in the major beta-barrel assembly pathway that is responsible for biogenesis of all outer membrane beta-barrel proteins, and acts in a late step after the SAM complex. The MDM10-MDM12-MMM1 subcomplex further acts in the TOM40-specific pathway after the action of the MDM12-MMM1 complex. Essential for establishing and maintaining the structure of mitochondria and maintenance of mtDNA nucleoids. This chain is Maintenance of mitochondrial morphology protein 1, found in Ajellomyces dermatitidis (strain ER-3 / ATCC MYA-2586) (Blastomyces dermatitidis).